A 229-amino-acid polypeptide reads, in one-letter code: Large ribosomal subunit protein uL1 (229 aa).

Belongs to the universal ribosomal protein uL1 family. In terms of assembly, part of the 50S ribosomal subunit.

In terms of biological role, binds directly to 23S rRNA. The L1 stalk is quite mobile in the ribosome, and is involved in E site tRNA release. Its function is as follows. Protein L1 is also a translational repressor protein, it controls the translation of the L11 operon by binding to its mRNA. In Caulobacter vibrioides (strain ATCC 19089 / CIP 103742 / CB 15) (Caulobacter crescentus), this protein is Large ribosomal subunit protein uL1.